The primary structure comprises 521 residues: Probable cytochrome P450 12d1 proximal, mitochondrial (521 aa).

The N-terminal 19 residues, 1 to 19, are a transit peptide targeting the mitochondrion; sequence MNTLSSARSVAIYVGPVRS. C467 contributes to the heme binding site.

The protein belongs to the cytochrome P450 family. The cofactor is heme.

The protein resides in the mitochondrion membrane. This is Probable cytochrome P450 12d1 proximal, mitochondrial (Cyp12d1-p) from Drosophila melanogaster (Fruit fly).